The following is a 181-amino-acid chain: MKFLFDYFPIICFFVAYKFWGIYIATAAAMVVSALQVAIYWIRFRRFEKFHVITLIFILLLGSFTLVFHNAIFIKWKPTIVYWIFAIVLFGSHFFGKHTLVHRMLKEKIELPAKTWSRLNLSWALFFLILGVLNLFVVYNFDTNTWVNFKLFGTLALMLVFILGQAFYIARHAQNLKTNSR.

A run of 5 helical transmembrane segments spans residues 8–28 (FPIICFFVAYKFWGIYIATAA), 53–73 (ITLIFILLLGSFTLVFHNAIF), 76–96 (WKPTIVYWIFAIVLFGSHFFG), 121–141 (LSWALFFLILGVLNLFVVYNF), and 149–169 (FKLFGTLALMLVFILGQAFYI).

Belongs to the YciB family.

Its subcellular location is the cell inner membrane. Functionally, plays a role in cell envelope biogenesis, maintenance of cell envelope integrity and membrane homeostasis. This is Inner membrane-spanning protein YciB from Coxiella burnetii (strain CbuK_Q154) (Coxiella burnetii (strain Q154)).